We begin with the raw amino-acid sequence, 498 residues long: Calcitonin receptor (498 aa).

A signal peptide spans 1–29 (MRFTLTRWCLTLFIFLNRPLPVLPDSADG). Over 30 to 147 (AHTPTLEPEP…FTPDKLQNAY (118 aa)) the chain is Extracellular. Disulfide bonds link cysteine 56/cysteine 82, cysteine 73/cysteine 113, and cysteine 96/cysteine 135. 3 N-linked (GlcNAc...) asparagine glycosylation sites follow: asparagine 74, asparagine 126, and asparagine 131. A helical transmembrane segment spans residues 148–170 (ILYYLAIVGHSLSILTLLISLGI). At 171-198 (FMFLRYFNLLAPFNALLYPTRSISCQRV) the chain is on the cytoplasmic side. Residues 199–219 (TLHKNMFLTYVLNSIIIIVHL) form a helical membrane-spanning segment. At 220–236 (VVIVPNGELVKRDPPIC) the chain is on the extracellular side. Cysteine 236 and cysteine 306 form a disulfide bridge. A helical transmembrane segment spans residues 237–259 (KVLHFFHQYMMSCNYFWMLCEGV). The Cytoplasmic portion of the chain corresponds to 260–276 (YLHTLIVVSVFAEGQRL). Residues 277-297 (WWYHVLGWGFPLIPTTAHAIT) traverse the membrane as a helical segment. Residues 298 to 313 (RAVLFNDNCWLSVDTN) are Extracellular-facing. A helical membrane pass occupies residues 314–337 (LLYIIHGPVMAALVVNFFFLLNIL). The Cytoplasmic portion of the chain corresponds to 338–357 (RVLVKKLKESQEAESHMYLK). Residues 358–376 (AVRATLILVPLLGVQFVVL) traverse the membrane as a helical segment. The Extracellular segment spans residues 377–384 (PWRPSTPL). A helical membrane pass occupies residues 385 to 411 (LGKIYDYVVHSLIHFQGFFVAIIYCFC). Residues 412 to 498 (NHEVQGALKR…MEVLEQETSA (87 aa)) lie on the Cytoplasmic side of the membrane.

It belongs to the G-protein coupled receptor 2 family. As to quaternary structure, heterodimer of CALCR and RAMP1, RAMP2 or RAMP3; the receptor complexes function as AMYR1, AMYR2 and AMYR3 receptors, respectively, and respond to amylin/IAPP, calcitonin/CT and CGRP1 ligands. Interacts with GPRASP2.

Its subcellular location is the cell membrane. Functionally, g protein-coupled receptor activated by ligand peptides amylin (IAPP), calcitonin (CT/CALCA) and calcitonin gene-related peptide type 1 (CGRP1/CALCA). CALCR interacts with receptor-activity-modifying proteins RAMP1, 2 and 3 to form receptor complexes AMYR1, 2 and 3, respectively. IAPP, CT and CGRP1 activate CALCR and AMYRs with distinct modes of receptor activation resulting in specific phenotypes. Ligand binding causes a conformation change that triggers signaling via guanine nucleotide-binding proteins (G proteins) and modulates the activity of downstream effectors. Activates cAMP-dependent pathway. The sequence is that of Calcitonin receptor from Sus scrofa (Pig).